The primary structure comprises 362 residues: Mannose-1-phosphate guanyltransferase (362 aa).

The protein belongs to the transferase hexapeptide repeat family.

The protein localises to the cytoplasm. It catalyses the reaction alpha-D-mannose 1-phosphate + GTP + H(+) = GDP-alpha-D-mannose + diphosphate. It participates in nucleotide-sugar biosynthesis; GDP-alpha-D-mannose biosynthesis; GDP-alpha-D-mannose from alpha-D-mannose 1-phosphate (GTP route): step 1/1. Functionally, involved in cell wall synthesis where it is required for glycosylation. Involved in cell cycle progression through cell-size checkpoint. This Candida albicans (strain SC5314 / ATCC MYA-2876) (Yeast) protein is Mannose-1-phosphate guanyltransferase (MPG1).